We begin with the raw amino-acid sequence, 415 residues long: MFERSRYTIDQIDPEIFAAIQKENQRQEDHIELIASENYTSPAVMAAQGSQLTNKYAEGYPGKRYYGGCEYVDVVEQLAIDRVKQLFGAEAANVQPNSGSQANQGVFFAVLKPGDTIMGMSLAEGGHLTHGMALNMSGKWFNVVSYGLNAQEDIDYDALEALAQEKKPKLIIAGASAFALRIDFERIGKIAKSIGAYFMVDMAHYAGLIAAGVYPNPVPHADFVTTTTHKSLRGPRGGVILMKAEHEKAINSAIFPGIQGGPLMHVIAGKAVAFKEALSPEFKAYQEQVVKNAAAMAETLMARGLRIVSGRTESHVMLVDLRAKKITGKEAEKVLGDAHITVNKNAIPNDPEKPFVTSGVRLGSPAMTTRGFKEAEAVKVAHLIADVLDNPHDEANIAAVRAKVAELTKQFPVYG.

(6S)-5,6,7,8-tetrahydrofolate-binding positions include L122 and 126 to 128 (GHL). N6-(pyridoxal phosphate)lysine is present on K230.

It belongs to the SHMT family. In terms of assembly, homodimer. Requires pyridoxal 5'-phosphate as cofactor.

The protein resides in the cytoplasm. It carries out the reaction (6R)-5,10-methylene-5,6,7,8-tetrahydrofolate + glycine + H2O = (6S)-5,6,7,8-tetrahydrofolate + L-serine. The protein operates within one-carbon metabolism; tetrahydrofolate interconversion. It participates in amino-acid biosynthesis; glycine biosynthesis; glycine from L-serine: step 1/1. Catalyzes the reversible interconversion of serine and glycine with tetrahydrofolate (THF) serving as the one-carbon carrier. This reaction serves as the major source of one-carbon groups required for the biosynthesis of purines, thymidylate, methionine, and other important biomolecules. Also exhibits THF-independent aldolase activity toward beta-hydroxyamino acids, producing glycine and aldehydes, via a retro-aldol mechanism. This Ralstonia pickettii (strain 12J) protein is Serine hydroxymethyltransferase.